The sequence spans 282 residues: Putative quercetin 2,3-dioxygenase VC_A0969 (282 aa).

The tract at residues 1 to 21 (MTKDREIRQTVPAQPTSDGDG) is disordered. The a divalent metal cation site is built by H59, H61, H103, and E105.

Belongs to the pirin family. It depends on a divalent metal cation as a cofactor.

It carries out the reaction quercetin + O2 = 2-(3,4-dihydroxybenzoyloxy)-4,6-dihydroxybenzoate + CO. It functions in the pathway flavonoid metabolism; quercetin degradation. Its function is as follows. Putative quercetin 2,3-dioxygenase. The sequence is that of Putative quercetin 2,3-dioxygenase VC_A0969 from Vibrio cholerae serotype O1 (strain ATCC 39315 / El Tor Inaba N16961).